We begin with the raw amino-acid sequence, 416 residues long: Phosphatidylinositol 5-phosphate 4-kinase type-2 beta (416 aa).

Ser2 is subject to N-acetylserine. Position 8 is a phosphothreonine (Thr8). Ser19 bears the Phosphoserine mark. One can recognise a PIPK domain in the interval 38 to 415 (ASEPILSVLM…RFNEFMSNIL (378 aa)). A required for interaction with PIP5K1A region spans residues 64–70 (VMLMPDD). Lys94 and Lys150 each carry N6-acetyllysine. Residues 202 to 204 (RNV) and Lys214 each bind ATP. Residues 203-204 (NV) and Lys214 each bind GTP. Thr322 is subject to Phosphothreonine. Ser326 carries the post-translational modification Phosphoserine. A GTP-binding site is contributed by Asp369.

In terms of assembly, homodimer. Binds TNFRSF1A. Interacts with PIP4K2A; the interaction suppresses ubiquitination by the SPOP/CUL3 complex. Probably interacts with PIP5K1A; the interaction inhibits PIP5K1A kinase activity. Post-translationally, ubiquitinated by the SPOP/CUL3 complex. Ubiquitination is stimulated by PtdIns5P levels. Phosphorylated on serine residues.

Its subcellular location is the endoplasmic reticulum membrane. It is found in the cell membrane. The protein resides in the nucleus. It localises to the cytoplasm. The enzyme catalyses a 1,2-diacyl-sn-glycero-3-phospho-(1D-myo-inositol-5-phosphate) + ATP = a 1,2-diacyl-sn-glycero-3-phospho-(1D-myo-inositol-4,5-bisphosphate) + ADP + H(+). It carries out the reaction 1,2-dihexadecanoyl-sn-glycero-3-phospho-(1D-myo-inositol-5-phosphate) + ATP = 1,2-dihexadecanoyl-sn-glycero-3-phospho-(1D-myo-inositol-4,5-bisphosphate) + ADP + H(+). The catalysed reaction is 1,2-dihexadecanoyl-sn-glycero-3-phospho-(1D-myo-inositol-5-phosphate) + GTP = 1,2-dihexadecanoyl-sn-glycero-3-phospho-(1D-myo-inositol-4,5-bisphosphate) + GDP + H(+). Its function is as follows. Participates in the biosynthesis of phosphatidylinositol 4,5-bisphosphate. Preferentially utilizes GTP, rather than ATP, for PI(5)P phosphorylation and its activity reflects changes in direct proportion to the physiological GTP concentration. Its GTP-sensing activity is critical for metabolic adaptation. In collaboration with PIP4K2A, has a role in mediating autophagy in times of nutrient stress. Required for autophagosome-lysosome fusion and the regulation of cellular lipid metabolism. PIP4Ks negatively regulate insulin signaling through a catalytic-independent mechanism. They interact with PIP5Ks and suppress PIP5K-mediated PtdIns(4,5)P2 synthesis and insulin-dependent conversion to PtdIns(3,4,5)P3. This is Phosphatidylinositol 5-phosphate 4-kinase type-2 beta from Mus musculus (Mouse).